Consider the following 46-residue polypeptide: Defensin Tk-AMP-D6.1 (46 aa).

Cystine bridges form between Cys3-Cys46, Cys14-Cys34, Cys20-Cys40, and Cys24-Cys42.

Its function is as follows. Plant defense peptide. The chain is Defensin Tk-AMP-D6.1 from Triticum kiharae (Wheat).